The primary structure comprises 545 residues: Membrane protein insertase YidC (545 aa).

The next 6 membrane-spanning stretches (helical) occupy residues 10 to 30, 319 to 339, 341 to 361, 407 to 427, 467 to 487, and 502 to 522; these read AVYL…FLFS, LLYF…NVIP, WGLS…PLTF, IGGC…YGLV, ILPF…SNVS, and MPIM…IYWI.

Belongs to the OXA1/ALB3/YidC family. Type 1 subfamily. In terms of assembly, interacts with the Sec translocase complex via SecD. Specifically interacts with transmembrane segments of nascent integral membrane proteins during membrane integration.

It localises to the cell inner membrane. In terms of biological role, required for the insertion and/or proper folding and/or complex formation of integral membrane proteins into the membrane. Involved in integration of membrane proteins that insert both dependently and independently of the Sec translocase complex, as well as at least some lipoproteins. Aids folding of multispanning membrane proteins. This chain is Membrane protein insertase YidC, found in Borrelia duttonii (strain Ly).